The chain runs to 826 residues: MAASRGRSKKRSNLELSPDNLPLRSSGRQAKKKAVEIPDEDEDGSSEKKYRKCEKAGCTAAYPVCFASASERCAKNGYTSRWYHLSCGEHFCNECFDHYYRSHKDGYDKYSAWKRVWTSNGKTEPSPKAFMADQQLPYWVQCTKPECGKWRQLTKEIQLTPHMARTYRCGMKPNTITKPDTPDHCSFPEDLRVLEVSNHWWYPMLIQPPLLKDSVAAPLLSAYYPDCVGMSPSCTSTHRATVTAATTTTGSASPGEMEPSKAAPSSLVLGMNRYFQPFYQPNECGKALCVRPDVMELDELYEFPEYSRDPTMYLALRNLILALWYTNCKEALTPQKCIPHIIVRGLVRIRCVQEVERILYFMTRKGLINTGVLTVAAGQHLLPKHYHNKSVLVVGAGPAGLAAARQLHNFGMKVTVLEAKDRIGGRVWDDKSFKGVVVGRGPQIVNGCINNPVALMCEQLGISMRKLGERCDLIQEGGRITDPTVDKRMDFHFNALLDVVSEWRKDKTLLQDVPLGEKIEEIYRAFVKESGIQFSELEGQVLQFHLSNLEYACGSSLHQVSARSWDHNEFFAQFAGDHTLLTPGYSTIIEKLAEGLDIRLKSPVQSIDYTGDEVQVTTTDGMGHSAQKVLVTVPLAILQRGAIQFNPPLSEKKMKAINSLGAGIIEKIALQFPYRFWDSKVQGADFFGHVPPSASQRGLFAVFYDMDSQQSVLMSVITGEAVASLRTMDDKQVLQQCMGILRELFKEQEIPEPTKYFVTRWSTEPWIQMAYSFVKTFGSGEAYDIIAEEIQGTVFFAGEATNRHFPQTVTGAYLSGVREASKIAAF.

Residues 1-11 (MAASRGRSKKR) are compositionally biased toward basic residues. Residues 1–46 (MAASRGRSKKRSNLELSPDNLPLRSSGRQAKKKAVEIPDEDEDGSS) form a disordered region. A phosphoserine mark is found at serine 17 and serine 26. 12 residues coordinate Zn(2+): cysteine 53, cysteine 58, cysteine 65, cysteine 73, histidine 84, histidine 90, cysteine 92, cysteine 95, cysteine 142, cysteine 147, cysteine 169, and cysteine 185. The CW-type zinc finger occupies 133–193 (DQQLPYWVQC…HCSFPEDLRV (61 aa)). At serine 253 the chain carries Phosphoserine. The GLYR1-binding stretch occupies residues 279–298 (YQPNECGKALCVRPDVMELD). One can recognise an SWIRM domain in the interval 281 to 379 (PNECGKALCV…TGVLTVAAGQ (99 aa)). Position 389–445 (389–445 (KSVLVVGAGPAGLAAARQLHNFGMKVTVLEAKDRIGGRVWDDKSFKGVVVGRGPQIV)) interacts with FAD. 3 histone H3-binding regions span residues 444 to 473 (IVNGCINNPVALMCEQLGISMRKLGERCDL), 493 to 504 (FNALLDVVSEWR), and 544 to 578 (FHLSNLEYACGSSLHQVSARSWDHNEFFAQFAGDH). The interval 570-572 (FFA) is GLYR1-binding. FAD-binding positions include valine 604, glutamate 799, and 807 to 809 (QTV). Residues 802–818 (NRHFPQTVTGAYLSGVR) form a GLYR1-binding region.

Belongs to the flavin monoamine oxidase family. Interacts with its cofactor GLYR1 at nucleosomes; this interaction stimulates H3K4me1 and H3K4me2 demethylation. In contrast to KDM1A, does not form a complex with RCOR1/CoREST. Possible accessory component of the polycomb repressive deubiquitinase (PR-DUB) complex, at least composed of BAP1, one of ASXL1, ASXL2 or (probably) ASXL3 and one of MBD5 or MBD6. The PR-DUB core associates with a number of accessory proteins, including FOXK1, FOXK2, KDM1B, HCFC1 and OGT; KDM1B specifically associates with ASXL2 PR-DUB complexes. FAD is required as a cofactor. It depends on Zn(2+) as a cofactor. In terms of tissue distribution, expressed in growing oocytes and in intestinal gland.

It is found in the nucleus. The protein resides in the chromosome. It catalyses the reaction N(6),N(6)-dimethyl-L-lysyl(4)-[histone H3] + 2 A + 2 H2O = L-lysyl(4)-[histone H3] + 2 formaldehyde + 2 AH2. It carries out the reaction N(6)-methyl-L-lysyl(4)-[histone H3] + A + H2O = L-lysyl(4)-[histone H3] + formaldehyde + AH2. With respect to regulation, inhibited by tranylcypromine, but not by pargyline, deprenyl or rasagiline. Histone H3K4me1 and H3K4me2 demethylase activity is inhibited by DNA, this inhibition is released in complex with GLYR1. Functionally, histone demethylase that demethylates 'Lys-4' of histone H3, a specific tag for epigenetic transcriptional activation, thereby acting as a corepressor. Required for de novo DNA methylation of a subset of imprinted genes during oogenesis. Acts by oxidizing the substrate by FAD to generate the corresponding imine that is subsequently hydrolyzed. Demethylates both mono- and di-methylated 'Lys-4' of histone H3. Has no effect on tri-methylated 'Lys-4', mono-, di- or tri-methylated 'Lys-9', mono-, di- or tri-methylated 'Lys-27', mono-, di- or tri-methylated 'Lys-36' of histone H3, or on mono-, di- or tri-methylated 'Lys-20' of histone H4. Its function is as follows. Histone demethylase that demethylates 'Lys-4' of histone H3, a specific tag for epigenetic transcriptional activation, thereby acting as a corepressor. Required for de novo DNA methylation of a subset of imprinted genes during oogenesis. Acts by oxidizing the substrate by FAD to generate the corresponding imine that is subsequently hydrolyzed. Demethylates both mono- and di-methylated 'Lys-4' of histone H3. Has no effect on tri-methylated 'Lys-4', mono-, di- or tri-methylated 'Lys-9', mono-, di- or tri-methylated 'Lys-27', mono-, di- or tri-methylated 'Lys-36' of histone H3, or on mono-, di- or tri-methylated 'Lys-20' of histone H4. Alone, it is unable to demethylate H3K4me on nucleosomes and requires the presence of GLYR1 to achieve such activity, they form a multifunctional enzyme complex that modifies transcribed chromatin and facilitates Pol II transcription through nucleosomes. This chain is Lysine-specific histone demethylase 1B, found in Mus musculus (Mouse).